The chain runs to 195 residues: Putative archaetidylserine decarboxylase proenzyme (195 aa).

Residue Ser159 is the Schiff-base intermediate with substrate; via pyruvic acid of the active site. At Ser159 the chain carries Pyruvic acid (Ser); by autocatalysis.

The protein belongs to the phosphatidylserine decarboxylase family. PSD-A subfamily. In terms of assembly, heterodimer of a large membrane-associated beta subunit and a small pyruvoyl-containing alpha subunit. Pyruvate serves as cofactor. Post-translationally, is synthesized initially as an inactive proenzyme. Formation of the active enzyme involves a self-maturation process in which the active site pyruvoyl group is generated from an internal serine residue via an autocatalytic post-translational modification. Two non-identical subunits are generated from the proenzyme in this reaction, and the pyruvate is formed at the N-terminus of the alpha chain, which is derived from the carboxyl end of the proenzyme. The autoendoproteolytic cleavage occurs by a canonical serine protease mechanism, in which the side chain hydroxyl group of the serine supplies its oxygen atom to form the C-terminus of the beta chain, while the remainder of the serine residue undergoes an oxidative deamination to produce ammonia and the pyruvoyl prosthetic group on the alpha chain. During this reaction, the Ser that is part of the protease active site of the proenzyme becomes the pyruvoyl prosthetic group, which constitutes an essential element of the active site of the mature decarboxylase. In terms of processing, is synthesized initially as an inactive proenzyme. Formation of the active enzyme involves a self-maturation process in which the active site pyruvoyl group is generated from an internal serine residue via an autocatalytic post-translational modification. Two non-identical subunits are generated from the proenzyme in this reaction, and the pyruvate is formed at the N-terminus of the alpha chain, which is derived from the carboxyl end of the proenzyme. The post-translation cleavage follows an unusual pathway, termed non-hydrolytic serinolysis, in which the side chain hydroxyl group of the serine supplies its oxygen atom to form the C-terminus of the beta chain, while the remainder of the serine residue undergoes an oxidative deamination to produce ammonia and the pyruvoyl prosthetic group on the alpha chain.

It localises to the cell membrane. It carries out the reaction archaetidylserine + H(+) = archaetidylethanolamine + CO2. In terms of biological role, catalyzes the formation of archaetidylethanolamine (PtdEtn) from archaetidylserine (PtdSer). In Archaeoglobus fulgidus (strain ATCC 49558 / DSM 4304 / JCM 9628 / NBRC 100126 / VC-16), this protein is Putative archaetidylserine decarboxylase proenzyme.